The sequence spans 64 residues: Drosocin antimicrobial peptides (64 aa).

The first 19 residues, 1 to 19 (MKFTIVFLLLACVFAMAVA), serve as a signal peptide directing secretion. The propeptide occupies 20 to 21 (TP). Serine 28 is a glycosylation site (O-linked (GalNAc...) serine). The O-linked (GalNAc...) threonine glycan is linked to threonine 32. The tract at residues 32-40 (TSHPRPIRV) is critical for inhibition of translation, possibly due to its role in mediating interactions with bacterial 23S rRNA and peptide chain release factors.

This sequence belongs to the drosocin family. As to quaternary structure, associates with the bacterial 50S ribosomal complex, occupying the nascent peptide exit tunnel. Interacts with bacterial 23S rRNA; this interaction is direct. Interacts with bacterial rplV/50S ribosomal protein L22; this interaction is direct. Interacts with bacterial prfA/peptide chain release factor RF1; while associated with the bacterial 50S ribosomal complex, this interaction is direct and traps RF1 on the ribosome, inhibiting further translation. Post-translationally, proteolytically cleaved at a pair of basic residues corresponding to the RXK/RR optimal cleavage site for furin proteases to produce two distinct antibacterial peptides. O-glycosylated. O-glycosylation may be required for efficient uptake by target bacterial cells. Monosaccharide modification of Thr-32 provides better antibacterial activity than disaccharide modification or no modification. O-glycosylation of Thr-32 is not essential for antimicrobial activity but enhances this activity by mediating interactions with the 23S rRNA and increasing the efficiency of translation inhibition.

It is found in the secreted. Its function is as follows. Antibacterial peptide with strong anti-Gram-negative bacteria activity. Significantly contributes to antibacterial activity against Enterobacter cloacae but not Providencia burhodogranariea. Inhibitor of bacterial translation machinery that targets translation termination in a prfA- or prfB-dependent manner. Binds within the nascent peptide exit tunnel of the bacterial large ribosomal subunit, potentially interfering with nascent chain translocation that occurs post-peptide bond formation. Binds prfA/RF1 (and potentially prfB/RF2), trapping it on the ribosome after release of the nascent polypeptide chain and preventing further translation. The resulting depletion of peptide chain release factors further disrupts bacterial translation by preventing ribosomal peptide chain release and inducing stop codon readthrough. Entry into target Escherichia coli cells requires the bacterial peptide antibiotic transporter sbmA. In terms of biological role, peptide with significant antibacterial activity against Providencia burhodogranariea but not Enterobacter cloacae. The chain is Drosocin antimicrobial peptides (Dro) from Drosophila simulans (Fruit fly).